The primary structure comprises 657 residues: Glycogen debranching enzyme (657 aa).

Residue D336 is the Nucleophile of the active site. E371 serves as the catalytic Proton donor. The segment at 460–479 (ANGEENRDGTNNNYSNNHGK) is disordered.

Belongs to the glycosyl hydrolase 13 family.

It carries out the reaction Hydrolysis of (1-&gt;6)-alpha-D-glucosidic linkages to branches with degrees of polymerization of three or four glucose residues in limit dextrin.. Its pathway is glycan degradation; glycogen degradation. Removes maltotriose and maltotetraose chains that are attached by 1,6-alpha-linkage to the limit dextrin main chain, generating a debranched limit dextrin. The sequence is that of Glycogen debranching enzyme from Escherichia coli O9:H4 (strain HS).